The chain runs to 347 residues: Haptoglobin (347 aa).

A signal peptide spans Met1–Ala18. Residues Asp31–Ala88 enclose the Sushi domain. 4 disulfides stabilise this stretch: Cys52-Cys86, Cys90-Cys207, Cys250-Cys281, and Cys292-Cys322. The Peptidase S1 domain maps to Ile103 to Ala345. Residues Asn125, Asn148, Asn152, and Asn182 are each glycosylated (N-linked (GlcNAc...) asparagine). Positions Val259 to Thr264 are interaction with CD163.

Belongs to the peptidase S1 family. Tetramer of two alpha and two beta chains; disulfide-linked. The hemoglobin/haptoglobin complex is composed of a haptoglobin dimer bound to two hemoglobin alpha-beta dimers. Interacts with CD163. Interacts with ERGIC3. As to expression, expressed by the liver and secreted in plasma.

Its subcellular location is the secreted. As a result of hemolysis, hemoglobin is found to accumulate in the kidney and is secreted in the urine. Haptoglobin captures, and combines with free plasma hemoglobin to allow hepatic recycling of heme iron and to prevent kidney damage. Haptoglobin also acts as an antioxidant, has antibacterial activity and plays a role in modulating many aspects of the acute phase response. Hemoglobin/haptoglobin complexes are rapidly cleared by the macrophage CD163 scavenger receptor expressed on the surface of liver Kupfer cells through an endocytic lysosomal degradation pathway. This chain is Haptoglobin (HP), found in Ateles geoffroyi (Black-handed spider monkey).